The sequence spans 126 residues: Aspartate 1-decarboxylase (126 aa).

The active-site Schiff-base intermediate with substrate; via pyruvic acid is Ser-25. Pyruvic acid (Ser) is present on Ser-25. Thr-57 serves as a coordination point for substrate. Tyr-58 serves as the catalytic Proton donor. 73–75 (GGA) contacts substrate.

The protein belongs to the PanD family. As to quaternary structure, heterooctamer of four alpha and four beta subunits. It depends on pyruvate as a cofactor. In terms of processing, is synthesized initially as an inactive proenzyme, which is activated by self-cleavage at a specific serine bond to produce a beta-subunit with a hydroxyl group at its C-terminus and an alpha-subunit with a pyruvoyl group at its N-terminus.

Its subcellular location is the cytoplasm. It carries out the reaction L-aspartate + H(+) = beta-alanine + CO2. It participates in cofactor biosynthesis; (R)-pantothenate biosynthesis; beta-alanine from L-aspartate: step 1/1. Catalyzes the pyruvoyl-dependent decarboxylation of aspartate to produce beta-alanine. The protein is Aspartate 1-decarboxylase of Acinetobacter baumannii (strain AB307-0294).